Reading from the N-terminus, the 228-residue chain is UPF0173 metal-dependent hydrolase lin1612 (228 aa).

This sequence belongs to the UPF0173 family.

This Listeria innocua serovar 6a (strain ATCC BAA-680 / CLIP 11262) protein is UPF0173 metal-dependent hydrolase lin1612.